The sequence spans 208 residues: MKKGLFITVEGIEGAGKTTNLNFIRSILEESGEEVVMTREPGGTPMAEEVRELLLRPREEAVSSTAELLLMFAARAQHLEQKIKPTIERGVHVLSDRFTDATYAYQGGGRGLSWAMIQDLEKLVQAGFKPDLTLLLRIDPETGMARARKRGALDRFEREKLEFYFCVQEGYMKRVAEDPERFLVVDAQQSLEEVQAAIAQGLAAKLAG.

An ATP-binding site is contributed by 11–18; sequence GIEGAGKT.

Belongs to the thymidylate kinase family.

It catalyses the reaction dTMP + ATP = dTDP + ADP. Its function is as follows. Phosphorylation of dTMP to form dTDP in both de novo and salvage pathways of dTTP synthesis. This is Thymidylate kinase from Hahella chejuensis (strain KCTC 2396).